Consider the following 137-residue polypeptide: Endoribonuclease YbeY (137 aa).

Residues histidine 107, histidine 111, and aspartate 117 each coordinate Zn(2+).

Belongs to the endoribonuclease YbeY family. It depends on Zn(2+) as a cofactor.

It is found in the cytoplasm. In terms of biological role, single strand-specific metallo-endoribonuclease involved in late-stage 70S ribosome quality control and in maturation of the 3' terminus of the 16S rRNA. The chain is Endoribonuclease YbeY from Bacteroides thetaiotaomicron (strain ATCC 29148 / DSM 2079 / JCM 5827 / CCUG 10774 / NCTC 10582 / VPI-5482 / E50).